We begin with the raw amino-acid sequence, 628 residues long: Kelch-like protein diablo (628 aa).

The tract at residues 1-56 is disordered; it reads MGDLPGSTGGGSGPAAAGNASGNASSAGNTGLGVAGTTGVDRPPSPARLSHTSEKH. Low complexity predominate over residues 14–29; the sequence is PAAAGNASGNASSAGN. The 68-residue stretch at 74 to 141 folds into the BTB domain; it reads CDVVLNVGGR…CYTAHIIVEE (68 aa). The BACK domain occupies 176–278; that stretch reads CLGIRAFADT…SPKFLVGTVG (103 aa). 6 Kelch repeats span residues 325-371, 373-419, 420-466, 468-513, 515-560, and 561-607; these read VLFA…VLND, LYAV…VLDG, FLYA…VLGG, LYAI…VFNN, IYAV…VVNG, and QLYA…VMRA.

It functions in the pathway protein modification; protein ubiquitination. In terms of biological role, probable substrate-specific adapter of an E3 ubiquitin-protein ligase complex which mediates the ubiquitination and subsequent proteasomal degradation of target proteins. May have a role in synapse differentiation and growth. The protein is Kelch-like protein diablo of Drosophila pseudoobscura pseudoobscura (Fruit fly).